The chain runs to 258 residues: UPF0246 protein Pnap_3166 (258 aa).

The protein belongs to the UPF0246 family.

In Polaromonas naphthalenivorans (strain CJ2), this protein is UPF0246 protein Pnap_3166.